Here is a 236-residue protein sequence, read N- to C-terminus: MQTSIDPVFAGWDGSVAQARQLQQQLAQRVALRDEVSAAPALLAGFDVGFEDDGQTTRAAAVLLDAQTLLPLETHVARVPTSMPYVPGLLSFRELPALLRALALLARTPDLVFIDGQGIAHPRRFGIAAHFGVVTGLPSIGVAKQRLAGTFIEPGGERGDHSPILLAGAQIGWALRSKPRCNPLIVSPGHRVSMQGALDWTLRTLRAYRLPEPTRLADRLASRRGEIELQTQPTLL.

2 residues coordinate Mg(2+): Asp-47 and Asp-115.

This sequence belongs to the endonuclease V family. It depends on Mg(2+) as a cofactor.

Its subcellular location is the cytoplasm. The catalysed reaction is Endonucleolytic cleavage at apurinic or apyrimidinic sites to products with a 5'-phosphate.. In terms of biological role, DNA repair enzyme involved in the repair of deaminated bases. Selectively cleaves double-stranded DNA at the second phosphodiester bond 3' to a deoxyinosine leaving behind the intact lesion on the nicked DNA. The protein is Endonuclease V of Xanthomonas campestris pv. campestris (strain 8004).